Reading from the N-terminus, the 74-residue chain is Exodeoxyribonuclease 7 small subunit (74 aa).

The protein belongs to the XseB family. In terms of assembly, heterooligomer composed of large and small subunits.

Its subcellular location is the cytoplasm. The catalysed reaction is Exonucleolytic cleavage in either 5'- to 3'- or 3'- to 5'-direction to yield nucleoside 5'-phosphates.. Its function is as follows. Bidirectionally degrades single-stranded DNA into large acid-insoluble oligonucleotides, which are then degraded further into small acid-soluble oligonucleotides. This is Exodeoxyribonuclease 7 small subunit from Haemophilus ducreyi (strain 35000HP / ATCC 700724).